The sequence spans 130 residues: S-adenosylmethionine decarboxylase proenzyme (130 aa).

Ser-63 (schiff-base intermediate with substrate; via pyruvic acid) is an active-site residue. The residue at position 63 (Ser-63) is a Pyruvic acid (Ser); by autocatalysis. His-68 acts as the Proton acceptor; for processing activity in catalysis. Cys-83 serves as the catalytic Proton donor; for catalytic activity.

The protein belongs to the prokaryotic AdoMetDC family. Type 1 subfamily. In terms of assembly, heterotetramer of two alpha and two beta chains arranged as a dimer of alpha/beta heterodimers. Requires pyruvate as cofactor. Post-translationally, is synthesized initially as an inactive proenzyme. Formation of the active enzyme involves a self-maturation process in which the active site pyruvoyl group is generated from an internal serine residue via an autocatalytic post-translational modification. Two non-identical subunits are generated from the proenzyme in this reaction, and the pyruvate is formed at the N-terminus of the alpha chain, which is derived from the carboxyl end of the proenzyme. The post-translation cleavage follows an unusual pathway, termed non-hydrolytic serinolysis, in which the side chain hydroxyl group of the serine supplies its oxygen atom to form the C-terminus of the beta chain, while the remainder of the serine residue undergoes an oxidative deamination to produce ammonia and the pyruvoyl group blocking the N-terminus of the alpha chain.

The catalysed reaction is S-adenosyl-L-methionine + H(+) = S-adenosyl 3-(methylsulfanyl)propylamine + CO2. It participates in amine and polyamine biosynthesis; S-adenosylmethioninamine biosynthesis; S-adenosylmethioninamine from S-adenosyl-L-methionine: step 1/1. In terms of biological role, catalyzes the decarboxylation of S-adenosylmethionine to S-adenosylmethioninamine (dcAdoMet), the propylamine donor required for the synthesis of the polyamines spermine and spermidine from the diamine putrescine. In Thermotoga petrophila (strain ATCC BAA-488 / DSM 13995 / JCM 10881 / RKU-1), this protein is S-adenosylmethionine decarboxylase proenzyme.